The following is a 225-amino-acid chain: Cytidylate kinase (225 aa).

12 to 20 (GPSGAGKGT) lines the ATP pocket.

The protein belongs to the cytidylate kinase family. Type 1 subfamily.

It localises to the cytoplasm. The enzyme catalyses CMP + ATP = CDP + ADP. It catalyses the reaction dCMP + ATP = dCDP + ADP. In Stenotrophomonas maltophilia (strain R551-3), this protein is Cytidylate kinase.